A 231-amino-acid polypeptide reads, in one-letter code: Large ribosomal subunit protein uL1 (231 aa).

This sequence belongs to the universal ribosomal protein uL1 family. Part of the 50S ribosomal subunit.

Its function is as follows. Binds directly to 23S rRNA. The L1 stalk is quite mobile in the ribosome, and is involved in E site tRNA release. Functionally, protein L1 is also a translational repressor protein, it controls the translation of the L11 operon by binding to its mRNA. The sequence is that of Large ribosomal subunit protein uL1 from Thiobacillus denitrificans (strain ATCC 25259 / T1).